The primary structure comprises 89 residues: Small ribosomal subunit protein uS14 (89 aa).

The protein belongs to the universal ribosomal protein uS14 family. In terms of assembly, part of the 30S ribosomal subunit. Contacts proteins S3 and S10.

Binds 16S rRNA, required for the assembly of 30S particles and may also be responsible for determining the conformation of the 16S rRNA at the A site. In Chlorobium chlorochromatii (strain CaD3), this protein is Small ribosomal subunit protein uS14.